Here is a 286-residue protein sequence, read N- to C-terminus: Polyamine aminopropyltransferase (286 aa).

A PABS domain is found at 6–239; that stretch reads PVWIDEVFED…GWWSWLYASD (234 aa). Residue glutamine 34 coordinates S-methyl-5'-thioadenosine. Residues histidine 65 and aspartate 89 each coordinate spermidine. Residues glutamate 109 and 140-141 each bind S-methyl-5'-thioadenosine; that span reads DG. Residue aspartate 159 is the Proton acceptor of the active site. 159–162 provides a ligand contact to spermidine; it reads DGSD. Proline 166 provides a ligand contact to S-methyl-5'-thioadenosine.

It belongs to the spermidine/spermine synthase family. As to quaternary structure, homodimer or homotetramer. Homodimer.

The protein localises to the cytoplasm. It catalyses the reaction S-adenosyl 3-(methylsulfanyl)propylamine + putrescine = S-methyl-5'-thioadenosine + spermidine + H(+). It participates in amine and polyamine biosynthesis; spermidine biosynthesis; spermidine from putrescine: step 1/1. Catalyzes the irreversible transfer of a propylamine group from the amino donor S-adenosylmethioninamine (decarboxy-AdoMet) to putrescine (1,4-diaminobutane) to yield spermidine. This is Polyamine aminopropyltransferase from Synechococcus elongatus (strain ATCC 33912 / PCC 7942 / FACHB-805) (Anacystis nidulans R2).